Consider the following 230-residue polypeptide: uncharacterized protein (230 aa).

Transmembrane regions (helical) follow at residues 8 to 28 (SLILTALIGGIPSSTAVTMAF), 45 to 65 (SIILSWLVMFFRVIFYTFIIF), 72 to 92 (LVLLLLPYFALLLMFAIFLYL), 109 to 129 (PFSLSQAFTFGLIYSTISVIS), 141 to 161 (IYVLSFLSGIMDIDAITLLLA), 176 to 196 (MGILLAVMSNNLFKSGYAIIF), and 203 to 223 (IYFLFVALFTLIYTTTLLILF).

The protein to P.aeruginosa PA0043 and M.thermoautotrophicum MTH1451.

It localises to the cell membrane. This is an uncharacterized protein from Aquifex aeolicus (strain VF5).